The primary structure comprises 353 residues: Photosystem II protein D1 (353 aa).

The residue at position 2 (Thr2) is an N-acetylthreonine. Phosphothreonine is present on Thr2. Helical transmembrane passes span 29–46 (YIGWFGVLMIPTLLTATS), 118–133 (HFLLGVACYMGREWEL), and 142–156 (WIAVAYSAPVAAAAA). His118 contacts chlorophyll a. Tyr126 lines the pheophytin a pocket. Residues Asp170 and Glu189 each coordinate [CaMn4O5] cluster. Residues 197 to 218 (FHMLGVAGVFGGSLFSAMHGSL) form a helical membrane-spanning segment. His198 contacts chlorophyll a. A quinone contacts are provided by residues His215 and 264–265 (SF). His215 provides a ligand contact to Fe cation. His272 is a binding site for Fe cation. Residues 274-288 (FLAAWPVVGIWFTAL) form a helical membrane-spanning segment. 4 residues coordinate [CaMn4O5] cluster: His332, Glu333, Asp342, and Ala344. Positions 345–353 (AVEAPSTNG) are excised as a propeptide.

The protein belongs to the reaction center PufL/M/PsbA/D family. PSII is composed of 1 copy each of membrane proteins PsbA, PsbB, PsbC, PsbD, PsbE, PsbF, PsbH, PsbI, PsbJ, PsbK, PsbL, PsbM, PsbT, PsbX, PsbY, PsbZ, Psb30/Ycf12, at least 3 peripheral proteins of the oxygen-evolving complex and a large number of cofactors. It forms dimeric complexes. Requires The D1/D2 heterodimer binds P680, chlorophylls that are the primary electron donor of PSII, and subsequent electron acceptors. It shares a non-heme iron and each subunit binds pheophytin, quinone, additional chlorophylls, carotenoids and lipids. D1 provides most of the ligands for the Mn4-Ca-O5 cluster of the oxygen-evolving complex (OEC). There is also a Cl(-1) ion associated with D1 and D2, which is required for oxygen evolution. The PSII complex binds additional chlorophylls, carotenoids and specific lipids. as cofactor. In terms of processing, tyr-161 forms a radical intermediate that is referred to as redox-active TyrZ, YZ or Y-Z. C-terminally processed by CTPA; processing is essential to allow assembly of the oxygen-evolving complex and thus photosynthetic growth.

Its subcellular location is the plastid. The protein resides in the chloroplast thylakoid membrane. It catalyses the reaction 2 a plastoquinone + 4 hnu + 2 H2O = 2 a plastoquinol + O2. Its function is as follows. Photosystem II (PSII) is a light-driven water:plastoquinone oxidoreductase that uses light energy to abstract electrons from H(2)O, generating O(2) and a proton gradient subsequently used for ATP formation. It consists of a core antenna complex that captures photons, and an electron transfer chain that converts photonic excitation into a charge separation. The D1/D2 (PsbA/PsbD) reaction center heterodimer binds P680, the primary electron donor of PSII as well as several subsequent electron acceptors. The sequence is that of Photosystem II protein D1 from Panax ginseng (Korean ginseng).